A 145-amino-acid chain; its full sequence is ATP synthase epsilon chain (145 aa).

It belongs to the ATPase epsilon chain family. In terms of assembly, F-type ATPases have 2 components, CF(1) - the catalytic core - and CF(0) - the membrane proton channel. CF(1) has five subunits: alpha(3), beta(3), gamma(1), delta(1), epsilon(1). CF(0) has three main subunits: a, b and c.

It localises to the cell membrane. In terms of biological role, produces ATP from ADP in the presence of a proton gradient across the membrane. This Buchnera aphidicola subsp. Baizongia pistaciae (strain Bp) protein is ATP synthase epsilon chain.